We begin with the raw amino-acid sequence, 21 residues long: Paulistine (21 aa).

A disulfide bridge links Cys7 with Cys14. Thr21 is subject to Threonine amide.

This sequence belongs to the sylv/frat/paul family. Post-translationally, occurs in oxidized and reduced states which are thought to adopt a compact globular and linear structure, respectively.

Induces transient hyperalgesia and paw edema in mice. Probably exerts its effects via different pathways in an oxidation state-dependent way. This is Paulistine from Polybia paulista (Neotropical social wasp).